The primary structure comprises 238 residues: Orotidine 5'-phosphate decarboxylase (238 aa).

Substrate-binding positions include Asp-18, Lys-40, Asp-67–Thr-76, Thr-122, Arg-183, Gln-192, and Arg-213. Residue Lys-69 is the Proton donor of the active site.

This sequence belongs to the OMP decarboxylase family. Type 1 subfamily. As to quaternary structure, homodimer.

The catalysed reaction is orotidine 5'-phosphate + H(+) = UMP + CO2. Its pathway is pyrimidine metabolism; UMP biosynthesis via de novo pathway; UMP from orotate: step 2/2. Functionally, catalyzes the decarboxylation of orotidine 5'-monophosphate (OMP) to uridine 5'-monophosphate (UMP). The polypeptide is Orotidine 5'-phosphate decarboxylase (Brucella melitensis biotype 2 (strain ATCC 23457)).